The primary structure comprises 333 residues: Isopenicillin N synthase (333 aa).

Isopenicillin N is bound by residues R87, Y91, and Y191. The N-[(5S)-5-amino-5-carboxypentanoyl]-L-cysteinyl-D-valine site is built by R87, Y91, Y191, H216, and D218. Positions 180–290 (DTLSCRSLMI…RLSLPFFLHA (111 aa)) constitute a Fe2OG dioxygenase domain. Positions 216, 218, and 272 each coordinate Fe(2+). R281 is a 2-oxoglutarate binding site. S283 lines the isopenicillin N pocket. Residue S283 coordinates N-[(5S)-5-amino-5-carboxypentanoyl]-L-cysteinyl-D-valine.

The protein belongs to the iron/ascorbate-dependent oxidoreductase family. The cofactor is Fe cation. L-ascorbate is required as a cofactor.

The enzyme catalyses N-[(5S)-5-amino-5-carboxypentanoyl]-L-cysteinyl-D-valine + O2 = isopenicillin N + 2 H2O. It participates in antibiotic biosynthesis; penicillin G biosynthesis; penicillin G from L-alpha-aminoadipate and L-cysteine and L-valine: step 2/3. In terms of biological role, removes, in the presence of oxygen, 4 hydrogen atoms from delta-L-(alpha-aminoadipyl)-L-cysteinyl-D-valine (ACV) to form the azetidinone and thiazolidine rings of isopenicillin. This Streptomyces microflavus (Streptomyces lipmanii) protein is Isopenicillin N synthase (pcbC).